The primary structure comprises 72 residues: Translation initiation factor IF-1 (72 aa).

The region spanning 1 to 72 (MAKEDSIEMQ…TKGRIIFRAR (72 aa)) is the S1-like domain.

It belongs to the IF-1 family. As to quaternary structure, component of the 30S ribosomal translation pre-initiation complex which assembles on the 30S ribosome in the order IF-2 and IF-3, IF-1 and N-formylmethionyl-tRNA(fMet); mRNA recruitment can occur at any time during PIC assembly.

It is found in the cytoplasm. Functionally, one of the essential components for the initiation of protein synthesis. Stabilizes the binding of IF-2 and IF-3 on the 30S subunit to which N-formylmethionyl-tRNA(fMet) subsequently binds. Helps modulate mRNA selection, yielding the 30S pre-initiation complex (PIC). Upon addition of the 50S ribosomal subunit IF-1, IF-2 and IF-3 are released leaving the mature 70S translation initiation complex. The sequence is that of Translation initiation factor IF-1 from Actinobacillus succinogenes (strain ATCC 55618 / DSM 22257 / CCUG 43843 / 130Z).